Here is a 118-residue protein sequence, read N- to C-terminus: uncharacterized protein (118 aa).

Transmembrane regions (helical) follow at residues 22–44 (IIASIVGAVIIAAAISALLFSIA), 54–71 (LSPLVYSIVSLAVIPVLR), and 78–99 (PILSLLTAFSIPILFLSGVEWL).

The protein localises to the cell membrane. This is an uncharacterized protein from Archaeoglobus fulgidus (strain ATCC 49558 / DSM 4304 / JCM 9628 / NBRC 100126 / VC-16).